Reading from the N-terminus, the 594-residue chain is Aspartate--tRNA(Asp/Asn) ligase (594 aa).

Position 175 (glutamate 175) interacts with L-aspartate. The aspartate stretch occupies residues 199–202 (QIYK). L-aspartate is bound by residues arginine 221 and histidine 454. Position 221–223 (221–223 (RDE)) interacts with ATP. Glutamate 488 is an ATP binding site. Arginine 495 is an L-aspartate binding site. 540 to 543 (GIDR) provides a ligand contact to ATP.

The protein belongs to the class-II aminoacyl-tRNA synthetase family. Type 1 subfamily. As to quaternary structure, homodimer.

It localises to the cytoplasm. The catalysed reaction is tRNA(Asx) + L-aspartate + ATP = L-aspartyl-tRNA(Asx) + AMP + diphosphate. Aspartyl-tRNA synthetase with relaxed tRNA specificity since it is able to aspartylate not only its cognate tRNA(Asp) but also tRNA(Asn). Reaction proceeds in two steps: L-aspartate is first activated by ATP to form Asp-AMP and then transferred to the acceptor end of tRNA(Asp/Asn). The sequence is that of Aspartate--tRNA(Asp/Asn) ligase from Chelativorans sp. (strain BNC1).